A 218-amino-acid chain; its full sequence is MKFRFAALASVALLTSTVSVAGVVTSSSNIDFLAIDGQKPSKSLLKEKRSFNVSDTLPHQVVVRVAEIIRTGSDRSLYESDPIVVTFQGTTDDIIISAPRLETERDANAFKKSPKITVKTVSGVEIATKQEYLKQEGFLPGINLIENLSEYNASGAPAAVARLASTTMPAAIPGFGKAQKGKITVQGENVAEQMLQYWYQQADKETQQRFLSWAKGQK.

A signal peptide spans 1–21; the sequence is MKFRFAALASVALLTSTVSVA.

The protein belongs to the UPF0319 family.

In Pasteurella multocida (strain Pm70), this protein is UPF0319 protein PM0395.